The following is a 1004-amino-acid chain: Protein Wnt-5 (1004 aa).

The signal sequence occupies residues 1 to 29; it reads MSCYRKRHFLLWLLRAVCMLHLTARGAYA. N-linked (GlcNAc...) asparagine glycans are attached at residues asparagine 60, asparagine 66, asparagine 115, and asparagine 219. The disordered stretch occupies residues 238–298; the sequence is QKDKAKTSGA…NPGEQPIGGY (61 aa). 2 N-linked (GlcNAc...) asparagine glycosylation sites follow: asparagine 307 and asparagine 341. Residues 310-407 are disordered; it reads LLKPTDTDSH…ERDEWFRGQS (98 aa). Residues 389–403 are compositionally biased toward basic and acidic residues; the sequence is RREEQQRQRERDEWF. Asparagine 422 is a glycosylation site (N-linked (GlcNAc...) asparagine). The interval 438–472 is disordered; the sequence is KVSSEGSDGELLSRVERSQPSISSSSSSSSSSSRK. Residues 458-470 show a composition bias toward low complexity; the sequence is SISSSSSSSSSSS. N-linked (GlcNAc...) asparagine glycosylation is found at asparagine 484, asparagine 485, asparagine 528, and asparagine 593. Intrachain disulfides connect cysteine 583-cysteine 594, cysteine 633-cysteine 641, and cysteine 643-cysteine 661. Asparagine 724 carries an N-linked (GlcNAc...) asparagine glycan. The interval 790–822 is disordered; the sequence is FFKGEQQPRKKKRKNQRAAADAPAYPRNGIKES. Intrachain disulfides connect cysteine 862–cysteine 876, cysteine 864–cysteine 871, cysteine 933–cysteine 964, cysteine 949–cysteine 959, cysteine 963–cysteine 1003, cysteine 979–cysteine 994, cysteine 981–cysteine 991, and cysteine 986–cysteine 987. Residue serine 868 is the site of O-palmitoleoyl serine; by PORCN attachment. N-linked (GlcNAc...) asparagine glycosylation occurs at asparagine 952.

This sequence belongs to the Wnt family. In terms of assembly, interacts with porcupine (por). Glycosylated, glycosylation is stimulated by porcupine at the ER. In terms of processing, palmitoleoylated by porcupine. The lipid group functions as a sorting signal, targeting the ligand to polarized vesicles that transport Wnt5 to unique sites at the cell surface. Depalmitoleoylated by notum, leading to inhibit Wnt signaling pathway. As to expression, dynamic expression pattern during embryogenesis. Expression is seen in the limb primordia of the head and thoracic segments, mesodermal and neurogenic regions.

It localises to the secreted. Its subcellular location is the extracellular space. The protein localises to the extracellular matrix. In terms of biological role, binds as a ligand to a family of frizzled seven-transmembrane receptors and acts through a cascade of genes on the nucleus. Probable developmental protein. May be a signaling molecule which affects the development of discrete regions of tissues. Is likely to signal over only few cell diameters. May have a role in limb and CNS development; may be a downstream target of Dll that acts in the specification of these primordia. The polypeptide is Protein Wnt-5 (Wnt5) (Drosophila melanogaster (Fruit fly)).